The sequence spans 1316 residues: DNA-directed RNA polymerase subunit beta' (1316 aa).

The Zn(2+) site is built by Cys60, Cys62, Cys75, and Cys78. Residues Asp535, Asp537, and Asp539 each contribute to the Mg(2+) site. Zn(2+)-binding residues include Cys891, Cys968, Cys975, and Cys978.

The protein belongs to the RNA polymerase beta' chain family. In terms of assembly, the RNAP catalytic core consists of 2 alpha, 1 beta, 1 beta' and 1 omega subunit. When a sigma factor is associated with the core the holoenzyme is formed, which can initiate transcription. Requires Mg(2+) as cofactor. It depends on Zn(2+) as a cofactor.

The enzyme catalyses RNA(n) + a ribonucleoside 5'-triphosphate = RNA(n+1) + diphosphate. In terms of biological role, DNA-dependent RNA polymerase catalyzes the transcription of DNA into RNA using the four ribonucleoside triphosphates as substrates. The polypeptide is DNA-directed RNA polymerase subunit beta' (Mycobacterium bovis (strain BCG / Pasteur 1173P2)).